A 60-amino-acid polypeptide reads, in one-letter code: Large ribosomal subunit protein uL30 (60 aa).

It belongs to the universal ribosomal protein uL30 family. In terms of assembly, part of the 50S ribosomal subunit.

The protein is Large ribosomal subunit protein uL30 of Levilactobacillus brevis (strain ATCC 367 / BCRC 12310 / CIP 105137 / JCM 1170 / LMG 11437 / NCIMB 947 / NCTC 947) (Lactobacillus brevis).